The following is a 559-amino-acid chain: MSSRAAVFILNQNAKREQGRKAQTANIKAARAVSDIVRTTLGPKSMLKMLLDPMGGIVLTNDGNAILREIDVAHPAAKSMIELARAQDEEVGDGTTSVIILAGEILSAVESFLERDIHPTVIVGAYFQALEEIVRLTESYGEPIDIENENDLQKIVSSCIGTKFSSKWGNLIVDLAVKAVKSVYKKEGDYVEIDVKRYAKVEKIPGGLLEESVVLDGVMFNKDVTHPGMRRYIENPRVVLLDCPLEYKKGESMTNMEFTKEEDFKKALMMEEEEVKKMCAEDILRVKPDVVITEKGVSDTAQHFLLKYGNCTVIRRIRKTDNNRIARVTGATIANRPEELQESDVGTKCGLFEIKKIGDEYFSFMTKCENPKACSILLRGASKDVLNEIERNLHDALGVARNVMVNPKLVPGGGAIEMELACRLMEFSQKIEGMQQWPFKALAGALEVIPRTLAQNCGADVVRVMTELRAKHANDKEGLYWGIDGNTGKIRDMRESNVWDPISVKQQTLKTSIEATCMLLRIDDIVSGIKKDKRGGAGQRGGDRGQGDQEETFGDQRDG.

Cys368 and Cys374 form a disulfide bridge. Residues 531–559 (KDKRGGAGQRGGDRGQGDQEETFGDQRDG) form a disordered region.

Belongs to the TCP-1 chaperonin family. In terms of assembly, heterooligomeric complex of about 850 to 900 kDa that forms two stacked rings, 12 to 16 nm in diameter.

It localises to the cytoplasm. In terms of biological role, molecular chaperone; assists the folding of proteins upon ATP hydrolysis. Known to play a role, in vitro, in the folding of actin and tubulin. This chain is T-complex protein 1 subunit gamma, found in Oxytricha granulifera (Ciliate).